Consider the following 70-residue polypeptide: Large ribosomal subunit protein eL38 (70 aa).

It belongs to the eukaryotic ribosomal protein eL38 family.

This is Large ribosomal subunit protein eL38 (RpL38) from Bombyx mori (Silk moth).